We begin with the raw amino-acid sequence, 154 residues long: PTS system glucose-specific EIIA component (154 aa).

In terms of domain architecture, PTS EIIA type-1 spans 26–130 (DEVFKERMLG…SIKSPIIFTN (105 aa)). H63 and H78 together coordinate Zn(2+). H78 functions as the Tele-phosphohistidine intermediate; for EIIA activity in the catalytic mechanism. H78 is subject to Phosphohistidine; by HPr.

In terms of assembly, heterodimer with glycerol kinase (glpk). Requires Zn(2+) as cofactor.

It localises to the cytoplasm. Functionally, the phosphoenolpyruvate-dependent sugar phosphotransferase system (sugar PTS), a major carbohydrate active transport system, catalyzes the phosphorylation of incoming sugar substrates concomitantly with their translocation across the cell membrane. The enzyme II complex composed of PtsG and Crr is involved in glucose transport. This is PTS system glucose-specific EIIA component (crr) from Mycoplasma capricolum subsp. capricolum (strain California kid / ATCC 27343 / NCTC 10154).